A 473-amino-acid polypeptide reads, in one-letter code: MKTLYSLRRFSHVETLFNTTLAVAGRDQETTGFAWWAGNARLINLSGKLLGAHVAHAGLIVFWAGAMNLFEVAHFGPEKPMYEQGLILLPHLATLGWGVGPGGEIIDTFPYFVSGVLHLISSAVLGFGGIYHALLGPEIIEESFPLFRYVWKDRNKMTTILGIHLILLGLGAFLLVFKALYFGGVYDTWAPGGGDVRKITNLTLSPSIIFGFLLKSPFGGDGWIVSVDDLEDIIGGHVWVGSICIVGGIWHILTKPFAWARRALVWSGEAYLSYSLGALSIFGFTACCFVWFNNTAYPSEFYGPTGPEASQAQAFTFLVRDQRLGANVGAAQGPTGLGKYLMRSPTGEVIFGGETMRFWDLRAPWLEPLRGPNGLDLNRLKKDIQPWQERRSAEYMTHAPLGSLNSVGGVATEINAVNYVSPRSWLATSHFCLGFFFFVGHLWHAGRARAAAAGFEKGIDRDFEPVLSMTPLN.

The propeptide occupies Met-1–Glu-14. Residue Thr-15 is modified to N-acetylthreonine. Position 15 is a phosphothreonine (Thr-15). Helical transmembrane passes span Leu-69–Ala-93, Leu-134–Asn-155, Lys-178–Thr-200, Lys-255–Ser-275, and Trp-291–Ala-312. Glu-367 contacts [CaMn4O5] cluster. Residues Arg-447–Pro-471 traverse the membrane as a helical segment.

Belongs to the PsbB/PsbC family. PsbC subfamily. As to quaternary structure, PSII is composed of 1 copy each of membrane proteins PsbA, PsbB, PsbC, PsbD, PsbE, PsbF, PsbH, PsbI, PsbJ, PsbK, PsbL, PsbM, PsbT, PsbX, PsbY, PsbZ, Psb30/Ycf12, at least 3 peripheral proteins of the oxygen-evolving complex and a large number of cofactors. It forms dimeric complexes. Binds multiple chlorophylls and provides some of the ligands for the Ca-4Mn-5O cluster of the oxygen-evolving complex. It may also provide a ligand for a Cl- that is required for oxygen evolution. PSII binds additional chlorophylls, carotenoids and specific lipids. is required as a cofactor.

It localises to the plastid membrane. One of the components of the core complex of photosystem II (PSII). It binds chlorophyll and helps catalyze the primary light-induced photochemical processes of PSII. PSII is a light-driven water:plastoquinone oxidoreductase, using light energy to abstract electrons from H(2)O, generating O(2) and a proton gradient subsequently used for ATP formation. This chain is Photosystem II CP43 reaction center protein, found in Cuscuta obtusiflora (Peruvian dodder).